The chain runs to 98 residues: NADH-ubiquinone oxidoreductase chain 4L (98 aa).

Transmembrane regions (helical) follow at residues M1–L21, S29–L49, and V59–V79.

Belongs to the complex I subunit 4L family. Core subunit of respiratory chain NADH dehydrogenase (Complex I) which is composed of 45 different subunits.

It localises to the mitochondrion inner membrane. It carries out the reaction a ubiquinone + NADH + 5 H(+)(in) = a ubiquinol + NAD(+) + 4 H(+)(out). Its function is as follows. Core subunit of the mitochondrial membrane respiratory chain NADH dehydrogenase (Complex I) which catalyzes electron transfer from NADH through the respiratory chain, using ubiquinone as an electron acceptor. Part of the enzyme membrane arm which is embedded in the lipid bilayer and involved in proton translocation. The sequence is that of NADH-ubiquinone oxidoreductase chain 4L (MT-ND4L) from Hemiechinus auritus (Long-eared hedgehog).